Here is a 100-residue protein sequence, read N- to C-terminus: Aspartyl/glutamyl-tRNA(Asn/Gln) amidotransferase subunit C (100 aa).

It belongs to the GatC family. Heterotrimer of A, B and C subunits.

The enzyme catalyses L-glutamyl-tRNA(Gln) + L-glutamine + ATP + H2O = L-glutaminyl-tRNA(Gln) + L-glutamate + ADP + phosphate + H(+). It catalyses the reaction L-aspartyl-tRNA(Asn) + L-glutamine + ATP + H2O = L-asparaginyl-tRNA(Asn) + L-glutamate + ADP + phosphate + 2 H(+). Allows the formation of correctly charged Asn-tRNA(Asn) or Gln-tRNA(Gln) through the transamidation of misacylated Asp-tRNA(Asn) or Glu-tRNA(Gln) in organisms which lack either or both of asparaginyl-tRNA or glutaminyl-tRNA synthetases. The reaction takes place in the presence of glutamine and ATP through an activated phospho-Asp-tRNA(Asn) or phospho-Glu-tRNA(Gln). This Streptococcus gordonii (strain Challis / ATCC 35105 / BCRC 15272 / CH1 / DL1 / V288) protein is Aspartyl/glutamyl-tRNA(Asn/Gln) amidotransferase subunit C.